The following is a 581-amino-acid chain: DNA primase (581 aa).

Residues 40-64 form a CHC2-type zinc finger; it reads CPFHNEKTPSFTVNGEKQFYHCFGC. The Toprim domain occupies 259 to 341; it reads NRLLVVEGYM…GRQLRFMFLP (83 aa). Residues Glu265, Asp309, and Asp311 each coordinate Mg(2+).

This sequence belongs to the DnaG primase family. Monomer. Interacts with DnaB. Zn(2+) is required as a cofactor. It depends on Mg(2+) as a cofactor.

The enzyme catalyses ssDNA + n NTP = ssDNA/pppN(pN)n-1 hybrid + (n-1) diphosphate.. Its function is as follows. RNA polymerase that catalyzes the synthesis of short RNA molecules used as primers for DNA polymerase during DNA replication. This is DNA primase from Shigella flexneri.